The chain runs to 352 residues: Selenide, water dikinase (352 aa).

C23 is a catalytic residue. ATP-binding positions include K26 and 54–56 (SRD). D57 is a binding site for Mg(2+). Residues D74, D97, and 145–147 (GHS) each bind ATP. D97 serves as a coordination point for Mg(2+). Position 233 (D233) interacts with Mg(2+).

It belongs to the selenophosphate synthase 1 family. Class I subfamily. As to quaternary structure, homodimer. Mg(2+) serves as cofactor.

The catalysed reaction is hydrogenselenide + ATP + H2O = selenophosphate + AMP + phosphate + 2 H(+). In terms of biological role, synthesizes selenophosphate from selenide and ATP. The polypeptide is Selenide, water dikinase (Shewanella sp. (strain MR-4)).